We begin with the raw amino-acid sequence, 266 residues long: Glucosamine-6-phosphate deaminase (266 aa).

Residue Asp72 is the Proton acceptor; for enolization step of the active site. Asp141 serves as the catalytic For ring-opening step. The active-site Proton acceptor; for ring-opening step is the His143. The active-site For ring-opening step is the Glu148.

It belongs to the glucosamine/galactosamine-6-phosphate isomerase family. NagB subfamily. Homohexamer.

The enzyme catalyses alpha-D-glucosamine 6-phosphate + H2O = beta-D-fructose 6-phosphate + NH4(+). It functions in the pathway amino-sugar metabolism; N-acetylneuraminate degradation; D-fructose 6-phosphate from N-acetylneuraminate: step 5/5. Its activity is regulated as follows. Allosterically activated by N-acetylglucosamine 6-phosphate (GlcNAc6P). Its function is as follows. Catalyzes the reversible isomerization-deamination of glucosamine 6-phosphate (GlcN6P) to form fructose 6-phosphate (Fru6P) and ammonium ion. The protein is Glucosamine-6-phosphate deaminase of Salmonella typhimurium (strain LT2 / SGSC1412 / ATCC 700720).